The chain runs to 488 residues: MMNKDQALIFELSKPGRVGHSLPELDVLEQPVETLIPAEFLREEAPELPEVSELQLMRHYTALSKRNHGVDSGFYPLGSCTMKYNPKINEDVARYPGFANIHPYQPEAQVQGALRLMYELQTALAEITGMDEVTLQPAAGAQGEWTGLMLIRAYHEANGDTNRTKVIVPDSAHGTNPASATVAGFESVTVRTDEDGLVDLDHLREVVGEDTAALMLTNPNTLGLFEAHIVEMAAIIHEAGGKLYYDGANSNAILGIARPGDMGFDVVHLNLHKTFTGPHGGGGPGSGPVGVKKELIPYLPKPVVVKDGDSYRLDYDRPHSIGRVKPYYGNFGINVRAYTYIRTMGPEGLRTVSEYAVLNANYMMRRLAPYFDLPYDQHCKHEFVLSGRQQKKLGVRTLDIAKRLLDFGYHPPTIYFPLNVEECLMIEPTETESKETLDEFIEAMIQIAKEAEETPEVVQEAPHHTVIGRLDETTAARKPILRYEKITQ.

Lys-273 bears the N6-(pyridoxal phosphate)lysine mark.

This sequence belongs to the GcvP family. C-terminal subunit subfamily. In terms of assembly, the glycine cleavage system is composed of four proteins: P, T, L and H. In this organism, the P 'protein' is a heterodimer of two subunits. Pyridoxal 5'-phosphate is required as a cofactor.

The catalysed reaction is N(6)-[(R)-lipoyl]-L-lysyl-[glycine-cleavage complex H protein] + glycine + H(+) = N(6)-[(R)-S(8)-aminomethyldihydrolipoyl]-L-lysyl-[glycine-cleavage complex H protein] + CO2. Functionally, the glycine cleavage system catalyzes the degradation of glycine. The P protein binds the alpha-amino group of glycine through its pyridoxal phosphate cofactor; CO(2) is released and the remaining methylamine moiety is then transferred to the lipoamide cofactor of the H protein. The sequence is that of Probable glycine dehydrogenase (decarboxylating) subunit 2 from Halalkalibacterium halodurans (strain ATCC BAA-125 / DSM 18197 / FERM 7344 / JCM 9153 / C-125) (Bacillus halodurans).